The sequence spans 61 residues: Temporin-ALi (61 aa).

Residues 1–22 (MFPLKKSLLLLFFLATINLSLC) form the signal peptide. Residues 23-46 (EQERNAEEERRDEPDERNAEVEKR) constitute a propeptide that is removed on maturation. Residue Leu59 is modified to Leucine amide.

The protein belongs to the frog skin active peptide (FSAP) family. Temporin subfamily. Expressed by the skin glands.

The protein localises to the secreted. Its function is as follows. Antimicrobial peptide with activity against Gram-positive and Gram-negative bacteria and against fungi. Has been tested against S.aureus (MIC=7.5 ug/mL), B.pumilus (MIC=7.5 ug/mL), B.cereus (MIC=75.0 ug/mL), E.coli (MIC=7.5 ug/mL), B.dysenteriae (MIC=20.0 ug/mL), A.cacoaceticus (MIC=60.0 ug/mL), P.aeruginosa (MIC=5.0 ug/mL) and C.albicans (MIC=5.0 ug/mL). Also shows a weak hemolytic activity. This chain is Temporin-ALi, found in Amolops loloensis (Lolokou Sucker Frog).